Consider the following 160-residue polypeptide: Large ribosomal subunit protein uL22c (160 aa).

Belongs to the universal ribosomal protein uL22 family. In terms of assembly, part of the 50S ribosomal subunit.

The protein localises to the plastid. The protein resides in the chloroplast. Its function is as follows. This protein binds specifically to 23S rRNA. The globular domain of the protein is located near the polypeptide exit tunnel on the outside of the subunit, while an extended beta-hairpin is found that lines the wall of the exit tunnel in the center of the 70S ribosome. The chain is Large ribosomal subunit protein uL22c (rpl22) from Lepidium virginicum (Virginia pepperweed).